The primary structure comprises 100 residues: Putative antiporter subunit mnhF2 (100 aa).

Helical transmembrane passes span Thr6 to Phe26, Val38 to Ile58, and Val62 to Ile82.

This sequence belongs to the CPA3 antiporters (TC 2.A.63) subunit F family. May form a heterooligomeric complex that consists of seven subunits: mnhA2, mnhB2, mnhC2, mnhD2, mnhE2, mnhF2 and mnhG2.

It is found in the cell membrane. The protein is Putative antiporter subunit mnhF2 (mnhF2) of Staphylococcus haemolyticus (strain JCSC1435).